A 506-amino-acid chain; its full sequence is Maturase K (506 aa).

The protein belongs to the intron maturase 2 family. MatK subfamily.

The protein localises to the plastid. It is found in the chloroplast. Usually encoded in the trnK tRNA gene intron. Probably assists in splicing its own and other chloroplast group II introns. This Trifolium willdenovii (Tomcat clover) protein is Maturase K.